A 299-amino-acid polypeptide reads, in one-letter code: ATP phosphoribosyltransferase (299 aa).

Belongs to the ATP phosphoribosyltransferase family. Long subfamily. The cofactor is Mg(2+).

It localises to the cytoplasm. It carries out the reaction 1-(5-phospho-beta-D-ribosyl)-ATP + diphosphate = 5-phospho-alpha-D-ribose 1-diphosphate + ATP. The protein operates within amino-acid biosynthesis; L-histidine biosynthesis; L-histidine from 5-phospho-alpha-D-ribose 1-diphosphate: step 1/9. Its activity is regulated as follows. Feedback inhibited by histidine. Catalyzes the condensation of ATP and 5-phosphoribose 1-diphosphate to form N'-(5'-phosphoribosyl)-ATP (PR-ATP). Has a crucial role in the pathway because the rate of histidine biosynthesis seems to be controlled primarily by regulation of HisG enzymatic activity. The polypeptide is ATP phosphoribosyltransferase (Shewanella loihica (strain ATCC BAA-1088 / PV-4)).